Consider the following 515-residue polypeptide: ATP synthase subunit alpha (515 aa).

171-178 is a binding site for ATP; sequence GDRQTGKT.

This sequence belongs to the ATPase alpha/beta chains family. In terms of assembly, F-type ATPases have 2 components, CF(1) - the catalytic core - and CF(0) - the membrane proton channel. CF(1) has five subunits: alpha(3), beta(3), gamma(1), delta(1), epsilon(1). CF(0) has three main subunits: a(1), b(2) and c(9-12). The alpha and beta chains form an alternating ring which encloses part of the gamma chain. CF(1) is attached to CF(0) by a central stalk formed by the gamma and epsilon chains, while a peripheral stalk is formed by the delta and b chains.

Its subcellular location is the cell inner membrane. The enzyme catalyses ATP + H2O + 4 H(+)(in) = ADP + phosphate + 5 H(+)(out). In terms of biological role, produces ATP from ADP in the presence of a proton gradient across the membrane. The alpha chain is a regulatory subunit. The protein is ATP synthase subunit alpha of Xylella fastidiosa (strain M12).